The sequence spans 180 residues: Adenine phosphoribosyltransferase (180 aa).

Belongs to the purine/pyrimidine phosphoribosyltransferase family. Homodimer.

It localises to the cytoplasm. The catalysed reaction is AMP + diphosphate = 5-phospho-alpha-D-ribose 1-diphosphate + adenine. It participates in purine metabolism; AMP biosynthesis via salvage pathway; AMP from adenine: step 1/1. In terms of biological role, catalyzes a salvage reaction resulting in the formation of AMP, that is energically less costly than de novo synthesis. The chain is Adenine phosphoribosyltransferase from Sinorhizobium medicae (strain WSM419) (Ensifer medicae).